A 173-amino-acid polypeptide reads, in one-letter code: L-2,4-diaminobutyric acid acetyltransferase (173 aa).

The 157-residue stretch at 14–170 folds into the N-acetyltransferase domain; that stretch reads WVFRRPTQED…TEYLYRIPLQ (157 aa).

It belongs to the acetyltransferase family. EctA subfamily.

The enzyme catalyses L-2,4-diaminobutanoate + acetyl-CoA = (2S)-4-acetamido-2-aminobutanoate + CoA + H(+). The protein operates within amine and polyamine biosynthesis; ectoine biosynthesis; L-ectoine from L-aspartate 4-semialdehyde: step 2/3. Functionally, catalyzes the acetylation of L-2,4-diaminobutyrate (DABA) to gamma-N-acetyl-alpha,gamma-diaminobutyric acid (ADABA) with acetyl coenzyme A. The sequence is that of L-2,4-diaminobutyric acid acetyltransferase (ectA) from Vibrio cholerae serotype O1 (strain ATCC 39315 / El Tor Inaba N16961).